The sequence spans 648 residues: TBC1 domain family member 17 (648 aa).

The tract at residues 218 to 309 (DPYSTTFSSF…PELKNRIFSG (92 aa)) is required for interaction with OPTN. The interval 240–259 (PQPEGAASDLPPPPDDEPEP) is disordered. The Rab-GAP TBC domain occupies 310-520 (GLSPSLRREA…RLWEVLWTGL (211 aa)). The segment at 594 to 648 (LAPPAEPHSPSPTASPLPLSPTRAPPTPPPSTDTAPQPDSSLEILPEEEDEGADS) is disordered. A compositionally biased stretch (pro residues) spans 597 to 624 (PAEPHSPSPTASPLPLSPTRAPPTPPPS). 2 positions are modified to phosphoserine: Ser602 and Ser604. A Phosphothreonine modification is found at Thr606. The residue at position 608 (Ser608) is a Phosphoserine. The residue at position 615 (Thr615) is a Phosphothreonine. Residues 625 to 634 (TDTAPQPDSS) are compositionally biased toward low complexity. Positions 638–648 (LPEEEDEGADS) are enriched in acidic residues.

In terms of assembly, interacts with OPTN; this interaction mediates TBC1D17 transient association with Rab8.

The protein localises to the cytoplasmic vesicle. The protein resides in the autophagosome. It localises to the cytoplasm. It is found in the recycling endosome. Functionally, probable RAB GTPase-activating protein that inhibits RAB8A/B function. Reduces Rab8 recruitment to tubules emanating from the endocytic recycling compartment (ERC) and inhibits Rab8-mediated endocytic trafficking, such as that of transferrin receptor (TfR). Involved in regulation of autophagy. The chain is TBC1 domain family member 17 from Homo sapiens (Human).